The primary structure comprises 248 residues: DnaA regulatory inactivator Hda (248 aa).

It belongs to the DnaA family. HdA subfamily. In terms of assembly, the active form seems to be an ADP-bound monomer. Forms the RIDA complex (regulatory inactivation of DnaA) of ATP-DnaA, ADP-Hda and the DNA-loaded beta sliding clamp (dnaN).

Its function is as follows. Mediates the interaction of DNA replication initiator protein DnaA with DNA polymerase subunit beta sliding clamp (dnaN). Stimulates hydrolysis of ATP-DnaA to ADP-DnaA, rendering DnaA inactive for reinitiation, a process called regulatory inhibition of DnaA or RIDA. In Proteus mirabilis (strain HI4320), this protein is DnaA regulatory inactivator Hda.